Here is a 282-residue protein sequence, read N- to C-terminus: Shikimate dehydrogenase (NADP(+)) (282 aa).

Shikimate is bound by residues 16-18 (SLS) and Thr63. The active-site Proton acceptor is the Lys67. The shikimate site is built by Asn88 and Asp103. NADP(+)-binding positions include 128–132 (GAGGA) and Gly243.

It belongs to the shikimate dehydrogenase family. Homodimer.

It catalyses the reaction shikimate + NADP(+) = 3-dehydroshikimate + NADPH + H(+). The protein operates within metabolic intermediate biosynthesis; chorismate biosynthesis; chorismate from D-erythrose 4-phosphate and phosphoenolpyruvate: step 4/7. Involved in the biosynthesis of the chorismate, which leads to the biosynthesis of aromatic amino acids. Catalyzes the reversible NADPH linked reduction of 3-dehydroshikimate (DHSA) to yield shikimate (SA). This Xylella fastidiosa (strain 9a5c) protein is Shikimate dehydrogenase (NADP(+)).